The sequence spans 596 residues: Bromodomain-containing protein 9 (596 aa).

Positions 1-10 are enriched in basic residues; the sequence is MGKKHKKHKS. Disordered stretches follow at residues 1–31 and 49–119; these read MGKK…QYYV and EVTE…SEGE. The segment covering 61-73 has biased composition (basic and acidic residues); the sequence is SFYEDRSDHERER. The segment covering 74 to 84 has biased composition (basic residues); it reads HKEKKKKKKKK. Residues 85-98 show a composition bias toward basic and acidic residues; it reads SEKEKDKYLDEDER. Residues 99 to 109 show a composition bias toward basic residues; that stretch reads RRRKEEKKRKR. The 105-residue stretch at 148-252 folds into the Bromo domain; the sequence is NESTPLQQLL…HTGFKMMSKQ (105 aa). The interval 226 to 228 is histone H4K5ac H4K8ac and histone H4K5bu H4K8bu binding; it reads TYN. A compositionally biased stretch (basic and acidic residues) spans 537 to 547; it reads DFHDVHNDRGG. Residues 537 to 596 are disordered; sequence DFHDVHNDRGGSRPSSSSSVSNNSERDHHLGSPSRISVGEQQDIHDPYEFLQSPETENQN. The segment covering 548–559 has biased composition (low complexity); sequence SRPSSSSSVSNN.

As to quaternary structure, binds acetylated histones H3 and H4. Binds butyrylated histone H4.

Its subcellular location is the nucleus. Functionally, plays a role in chromatin remodeling and regulation of transcription. Acts as a chromatin reader that recognizes and binds acylated histones: binds histones that are acetylated and/or butyrylated. In Xenopus tropicalis (Western clawed frog), this protein is Bromodomain-containing protein 9 (brd9).